A 393-amino-acid chain; its full sequence is SET domain-containing protein DDB_G0283443 (393 aa).

The 296-residue stretch at 17–312 (KKIEINETLE…KGDELSISYI (296 aa)) folds into the SET domain.

Belongs to the class V-like SAM-binding methyltransferase superfamily.

Its function is as follows. Probable methyltransferase. In Dictyostelium discoideum (Social amoeba), this protein is SET domain-containing protein DDB_G0283443.